The chain runs to 656 residues: Protein NO VEIN-LIKE (656 aa).

Residues 283 to 375 (DKDYCGKHTR…HVKQKIPKSA (93 aa)) are disordered. The span at 299–308 (EENDSADYEV) shows a compositional bias: acidic residues. The segment covering 342 to 353 (ESRNHEKSDSPK) has biased composition (basic and acidic residues). A compositionally biased stretch (basic residues) spans 354 to 371 (LLRRGPSKLRRGHVKQKI).

The polypeptide is Protein NO VEIN-LIKE (Arabidopsis thaliana (Mouse-ear cress)).